The sequence spans 137 residues: Small ribosomal subunit protein uS9 (137 aa).

The interval 114 to 137 (DSRMKERKKPGLRGARRGVQFSKR) is disordered. Basic residues predominate over residues 118 to 137 (KERKKPGLRGARRGVQFSKR).

It belongs to the universal ribosomal protein uS9 family.

The sequence is that of Small ribosomal subunit protein uS9 from Rhodopirellula baltica (strain DSM 10527 / NCIMB 13988 / SH1).